The sequence spans 189 residues: MPRVFLVRSRRPQPPNWSHLPDQLRGDAYVPDCSSLAVPPAHRSSGLRDTWAVSSQGTLTSAPKGPGTLGCPLCPKAFPLQRMLTRHLKCHSPARRHVCHYCGKGFHDAFDLKRHMRTHTGIRPFRCGACGKAFTQRCSLEAHLAKVHGQPASYAYRERREKLHVCEDCGFTSSRPDAYAQHRTLHRTT.

Positions 1-20 are disordered; the sequence is MPRVFLVRSRRPQPPNWSHL. C2H2-type zinc fingers lie at residues 69–91, 97–119, 125–148, and 164–186; these read LGCP…LKCH, HVCH…MRTH, FRCG…AKVH, and HVCE…RTLH.

The protein belongs to the krueppel C2H2-type zinc-finger protein family.

It localises to the nucleus. In terms of biological role, may act as a transcription regulator. This Mus musculus (Mouse) protein is Putative transcription factor ovo-like protein 3 (Ovol3).